The primary structure comprises 253 residues: Phycobilisome rod-core linker polypeptide CpcG4 (253 aa).

The PBS-linker domain maps to 11–191 (SSQNHRVTSF…DFQEKAGTVQ (181 aa)).

It belongs to the phycobilisome linker protein family. Part of the phycobilisome, a hemidiscoidal structure that is composed of two distinct substructures: a core complex and a number of rods radiating from the core.

Its subcellular location is the cellular thylakoid membrane. Functionally, rod-core linker protein required for attachment of phycocyanin to allophycocyanin in cores of phycobilisomes. Its function is as follows. Linker polypeptides determine the state of aggregation and the location of the disk-shaped phycobiliprotein units within the phycobilisome and modulate their spectroscopic properties in order to mediate a directed and optimal energy transfer. This Nostoc sp. (strain PCC 7120 / SAG 25.82 / UTEX 2576) protein is Phycobilisome rod-core linker polypeptide CpcG4.